The sequence spans 94 residues: Pyrimidine/purine nucleoside phosphorylase (94 aa).

Belongs to the nucleoside phosphorylase PpnP family.

The catalysed reaction is a purine D-ribonucleoside + phosphate = a purine nucleobase + alpha-D-ribose 1-phosphate. The enzyme catalyses adenosine + phosphate = alpha-D-ribose 1-phosphate + adenine. It catalyses the reaction cytidine + phosphate = cytosine + alpha-D-ribose 1-phosphate. It carries out the reaction guanosine + phosphate = alpha-D-ribose 1-phosphate + guanine. The catalysed reaction is inosine + phosphate = alpha-D-ribose 1-phosphate + hypoxanthine. The enzyme catalyses thymidine + phosphate = 2-deoxy-alpha-D-ribose 1-phosphate + thymine. It catalyses the reaction uridine + phosphate = alpha-D-ribose 1-phosphate + uracil. It carries out the reaction xanthosine + phosphate = alpha-D-ribose 1-phosphate + xanthine. In terms of biological role, catalyzes the phosphorolysis of diverse nucleosides, yielding D-ribose 1-phosphate and the respective free bases. Can use uridine, adenosine, guanosine, cytidine, thymidine, inosine and xanthosine as substrates. Also catalyzes the reverse reactions. This chain is Pyrimidine/purine nucleoside phosphorylase, found in Saccharophagus degradans (strain 2-40 / ATCC 43961 / DSM 17024).